Reading from the N-terminus, the 581-residue chain is Arginine--tRNA ligase (581 aa).

The short motif at Pro126–His136 is the 'HIGH' region element.

This sequence belongs to the class-I aminoacyl-tRNA synthetase family. In terms of assembly, monomer.

The protein resides in the cytoplasm. The enzyme catalyses tRNA(Arg) + L-arginine + ATP = L-arginyl-tRNA(Arg) + AMP + diphosphate. The protein is Arginine--tRNA ligase of Shewanella baltica (strain OS155 / ATCC BAA-1091).